The sequence spans 265 residues: Polyglutamine-binding protein 1 (265 aa).

Residues 46–80 (EGLPPSWYKVFDPSCGLPYYWNADTDLVSWLSPHD) enclose the WW domain. Serine 94 is modified (phosphoserine). A disordered region spans residues 94-265 (SSNADAEEKL…AEASRTKQQD (172 aa)). Residues 99–175 (AEEKLDRSHD…DKADREEGKE (77 aa)) are compositionally biased toward basic and acidic residues. 15 tandem repeats follow at residues 104 to 110 (DRSHDKS), 111 to 117 (DRGHDKS), 118 to 124 (DRSHEKL), 125 to 131 (DRGHDKS), 132 to 138 (DRGHDKS), 139 to 140 (DR), 141 to 142 (DR), 143 to 144 (ER), 150 to 151 (DR), 152 to 153 (ER), 154 to 155 (ER), 156 to 157 (DR), 158 to 159 (ER), 160 to 161 (DR), and 162 to 163 (DR). Residues 104–138 (DRSHDKSDRGHDKSDRSHEKLDRGHDKSDRGHDKS) are 5 X 7 AA approximate tandem repeats of D-R-[SG]-H-D-K-S. Residues 139 to 144 (DRDRER) form a 3 X 2 AA tandem repeats of [DE]-R region. The 7 X 2 AA tandem repeats of [DE]-R stretch occupies residues 150 to 163 (DRERERDRERDRDR). An important for interaction with TXNL4A region spans residues 245–255 (YPSPGAVLRAN). Serine 247 is modified (phosphoserine).

As to quaternary structure, interacts with POU3F2/Brn-2, ATXN1, TXNL4A, HTT and AR. Interaction with ATXN1 correlates positively with the length of the polyglutamine tract. Interacts with RNA polymerase II large subunit in a phosphorylation-dependent manner. Forms a ternary complex with ATXN1 mutant and phosphorylated RNA polymerase II. Interacts (via C-terminus) with TXNL4A and CD2BP2. Interacts (via WW domain) with ATN1 and SF3B1, and may interact with additional splice factors. Interacts (via WW domain) with WBP11; Leading to reduce interaction between PQBP1 and TXNL4A. Interacts with CAPRIN1. Interacts with DDX1. Interacts with SFPQ. Interacts with KHSRP.

The protein resides in the nucleus. Its subcellular location is the nucleus speckle. It localises to the cytoplasmic granule. Intrinsically disordered protein that acts as a scaffold, and which is involved in different processes, such as pre-mRNA splicing, transcription regulation, innate immunity and neuron development. Interacts with splicing-related factors via the intrinsically disordered region and regulates alternative splicing of target pre-mRNA species. May suppress the ability of POU3F2 to transactivate the DRD1 gene in a POU3F2 dependent manner. Can activate transcription directly or via association with the transcription machinery. May be involved in ATXN1 mutant-induced cell death. The interaction with ATXN1 mutant reduces levels of phosphorylated RNA polymerase II large subunit. Involved in the assembly of cytoplasmic stress granule, possibly by participating in the transport of neuronal RNA granules. Also acts as an innate immune sensor of infection by retroviruses, by detecting the presence of reverse-transcribed DNA in the cytosol. Directly binds retroviral reverse-transcribed DNA in the cytosol and interacts with CGAS, leading to activate the cGAS-STING signaling pathway, triggering type-I interferon production. The protein is Polyglutamine-binding protein 1 (PQBP1) of Gorilla gorilla gorilla (Western lowland gorilla).